A 94-amino-acid polypeptide reads, in one-letter code: Integration host factor subunit beta (94 aa).

This sequence belongs to the bacterial histone-like protein family. Heterodimer of an alpha and a beta chain.

This protein is one of the two subunits of integration host factor, a specific DNA-binding protein that functions in genetic recombination as well as in transcriptional and translational control. This chain is Integration host factor subunit beta, found in Haemophilus influenzae (strain PittGG).